The primary structure comprises 774 residues: Lysyl oxidase homolog 2 (774 aa).

Positions 1-25 (MERPLCSHLCSCLAVLALLSPLSLA) are cleaved as a signal peptide. 4 consecutive SRCR domains span residues 58–159 (LRLA…VVCS), 188–302 (IRAI…VSCV), 326–425 (VRLR…VRCN), and 435–544 (LRLN…VACS). Cystine bridges form between Cys84-Cys148, Cys97-Cys158, Cys128-Cys138, Cys218-Cys291, Cys231-Cys301, Cys265-Cys275, Cys351-Cys414, Cys364-Cys424, and Cys395-Cys405. Asn288 carries an N-linked (GlcNAc...) asparagine glycan. N-linked (GlcNAc...) asparagine glycosylation occurs at Asn455. 3 disulfides stabilise this stretch: Cys464-Cys530, Cys477-Cys543, and Cys511-Cys521. Residues 548 to 751 (PDLVLNAEMV…WMYNCHIGGS (204 aa)) form a lysyl-oxidase like region. Ca(2+)-binding residues include Asp549 and Leu550. Cystine bridges form between Cys573–Cys625, Cys579–Cys695, Cys657–Cys673, and Cys663–Cys685. Cu cation contacts are provided by His626, His628, and His630. Asn644 is a glycosylation site (N-linked (GlcNAc...) asparagine). Positions 653–689 (KASFCLEDTECEGDIQKNYECANFGDQGITMGCWDMY) form a cross-link, lysine tyrosylquinone (Lys-Tyr). Tyr689 bears the 2',4',5'-topaquinone mark. 4 residues coordinate Ca(2+): Glu722, Asp724, Asn727, and Asn728. The cysteines at positions 732 and 746 are disulfide-linked.

It belongs to the lysyl oxidase family. Component of some chromatin repressor complex. Interacts with SNAI1. Interacts with TAF10. Interacts with HSPA5. Interacts with EFEMP2. Requires Cu cation as cofactor. Lysine tyrosylquinone residue serves as cofactor. The lysine tyrosylquinone cross-link (LTQ) is generated by condensation of the epsilon-amino group of a lysine with a topaquinone produced by oxidation of tyrosine. In terms of processing, N-glycosylated. N-glycosylation on Asn-455 and Asn-644 may be essential for proper folding and secretion; may be composed of a fucosylated carbohydrates attached to a trimannose N-linked glycan core.

The protein resides in the secreted. It localises to the extracellular space. It is found in the extracellular matrix. Its subcellular location is the basement membrane. The protein localises to the nucleus. The protein resides in the chromosome. It localises to the endoplasmic reticulum. It catalyses the reaction L-lysyl-[protein] + O2 + H2O = (S)-2-amino-6-oxohexanoyl-[protein] + H2O2 + NH4(+). Specifically inhibited by a mouse monoclonal antibody AB0023, inhibition occurs in a non-competitive manner. In terms of biological role, mediates the post-translational oxidative deamination of lysine residues on target proteins leading to the formation of deaminated lysine (allysine). Acts as a transcription corepressor and specifically mediates deamination of trimethylated 'Lys-4' of histone H3 (H3K4me3), a specific tag for epigenetic transcriptional activation. Shows no activity against histone H3 when it is trimethylated on 'Lys-9' (H3K9me3) or 'Lys-27' (H3K27me3) or when 'Lys-4' is monomethylated (H3K4me1) or dimethylated (H3K4me2). Also mediates deamination of methylated TAF10, a member of the transcription factor IID (TFIID) complex, which induces release of TAF10 from promoters, leading to inhibition of TFIID-dependent transcription. LOXL2-mediated deamination of TAF10 results in transcriptional repression of genes required for embryonic stem cell pluripotency including POU5F1/OCT4, NANOG, KLF4 and SOX2. Involved in epithelial to mesenchymal transition (EMT) via interaction with SNAI1 and participates in repression of E-cadherin CDH1, probably by mediating deamination of histone H3. During EMT, involved with SNAI1 in negatively regulating pericentromeric heterochromatin transcription. SNAI1 recruits LOXL2 to pericentromeric regions to oxidize histone H3 and repress transcription which leads to release of heterochromatin component CBX5/HP1A, enabling chromatin reorganization and acquisition of mesenchymal traits. Interacts with the endoplasmic reticulum protein HSPA5 which activates the IRE1-XBP1 pathway of the unfolded protein response, leading to expression of several transcription factors involved in EMT and subsequent EMT induction. When secreted into the extracellular matrix, promotes cross-linking of extracellular matrix proteins by mediating oxidative deamination of peptidyl lysine residues in precursors to fibrous collagen and elastin. Acts as a regulator of sprouting angiogenesis, probably via collagen IV scaffolding. Acts as a regulator of chondrocyte differentiation, probably by regulating expression of factors that control chondrocyte differentiation. The protein is Lysyl oxidase homolog 2 (LOXL2) of Pongo abelii (Sumatran orangutan).